A 298-amino-acid polypeptide reads, in one-letter code: MGHIINPISYRLYNIRYWNNNWFSGSLNYSYLINQDILIDRFFRKFLTTHLDSTNAGIIFVNLKIIRSFNNISLYVYIHDSFLDLLFFNLKKNARFLLIKRLFNKKFYKKYRKALRQNKQLKQGLFMLLKKRVILRYSRKLFFLFIKNKILKIYWESFKTLSLFYLKRFSRSSFLSKIFIIGLSKMNVNANIISEFFFIRLTQYYTIWEVLRNINFLFKSLMKKRKLVKGYKITCSGRFSRKQRTTYSWKAFGSLAFSTVKSKLDYSYKTIALKYSSCTIKVWVRLGKKKSNLVDFVV.

The protein belongs to the universal ribosomal protein uS3 family.

The protein localises to the mitochondrion. This is Small ribosomal subunit protein uS3m (RPS3) from Acanthamoeba castellanii (Amoeba).